The chain runs to 361 residues: UDP-N-acetylglucosamine--N-acetylmuramyl-(pentapeptide) pyrophosphoryl-undecaprenol N-acetylglucosamine transferase (361 aa).

UDP-N-acetyl-alpha-D-glucosamine is bound by residues 12–14 (TGG), Asn124, Arg163, Ser189, Ile241, 260–265 (ALTVSE), and Gln286.

The protein belongs to the glycosyltransferase 28 family. MurG subfamily.

The protein localises to the cell inner membrane. It catalyses the reaction di-trans,octa-cis-undecaprenyl diphospho-N-acetyl-alpha-D-muramoyl-L-alanyl-D-glutamyl-meso-2,6-diaminopimeloyl-D-alanyl-D-alanine + UDP-N-acetyl-alpha-D-glucosamine = di-trans,octa-cis-undecaprenyl diphospho-[N-acetyl-alpha-D-glucosaminyl-(1-&gt;4)]-N-acetyl-alpha-D-muramoyl-L-alanyl-D-glutamyl-meso-2,6-diaminopimeloyl-D-alanyl-D-alanine + UDP + H(+). Its pathway is cell wall biogenesis; peptidoglycan biosynthesis. In terms of biological role, cell wall formation. Catalyzes the transfer of a GlcNAc subunit on undecaprenyl-pyrophosphoryl-MurNAc-pentapeptide (lipid intermediate I) to form undecaprenyl-pyrophosphoryl-MurNAc-(pentapeptide)GlcNAc (lipid intermediate II). This chain is UDP-N-acetylglucosamine--N-acetylmuramyl-(pentapeptide) pyrophosphoryl-undecaprenol N-acetylglucosamine transferase, found in Aeromonas hydrophila subsp. hydrophila (strain ATCC 7966 / DSM 30187 / BCRC 13018 / CCUG 14551 / JCM 1027 / KCTC 2358 / NCIMB 9240 / NCTC 8049).